A 1320-amino-acid polypeptide reads, in one-letter code: Poly [ADP-ribose] polymerase tankyrase-1 (1320 aa).

A compositionally biased stretch (basic residues) spans 1–15 (MAASRRSQHHHHHHQ). 2 disordered regions span residues 1 to 88 (MAAS…DGAV) and 111 to 152 (AGGG…AAGV). Positions 25–46 (SAPPPPPPPPLSPGLAPGPTPA) are enriched in pro residues. The segment covering 69–82 (DGSRDPPDRPRSPD) has biased composition (basic and acidic residues). The segment covering 120 to 152 (NSASSASSPTSSSSSSPSSPGSSLAESPEAAGV) has biased composition (low complexity). ANK repeat units follow at residues 174–202 (GALRELLEACRNGDVSRVKRLVDAANVNA), 208–237 (RKSSPLHFAAGFGRKDVVEHLLQMGANVHA), 241–270 (GGLIPLHNACSFGHAEVVSLLLCQGADPNA), 274–303 (WNYTPLHEAAIKGKIDVCIVLLQHGADPNI), 361–390 (RKSTPLHLAAGYNRVRIVQLLLQHGADVHA), 394–423 (GGLVPLHNACSYGHYEVTELLLKHGACVNA), 427–456 (WQFTPLHEAASKNRVEVCSLLLSHGADPTL), 514–546 (SHETALHCAVASLHPKRKQVAELLLRKGANVNE), 550–579 (DFMTPLHVAAERAHNDVMEVLHKHGAKMNA), 583–612 (LGQTALHRAALAGHLQTCRLLLSYGSDPSI), 676–705 (RHSTPLHFAAGYNRVSVVEYLLHHGADVHA), 709–738 (GGLVPLHNACSYGHYEVAELLVRHGASVNV), 742–771 (WKFTPLHEAAAKGKYEICKLLLKHGADPTK), 775–803 (DGNTPLDLVKEGDTDIQDLLRGDAALLDA), 829–858 (RNSTPLHLAAGYNNLEVAEYLLEHGADVNA), 862–891 (GGLIPLHNAASYGHVDIAALLIKYNTCVNA), 895–924 (WAFTPLHEAAQKGRTQLCALLLAHGADPTM), and 928–957 (EGQTPLDLATADDIRALLIDAMPPEALPTC). Residues 1019–1082 (GLDMNISQFL…IKGVERLLGG (64 aa)) form the SAM domain. One can recognise a PARP catalytic domain in the interval 1105–1310 (APEDKEYQSV…YQIMKPEAPS (206 aa)). Zn(2+) is bound by residues Cys-1227, His-1230, Cys-1235, and Cys-1238.

Belongs to the ARTD/PARP family. In terms of assembly, oligomerizes and associates with TNKS2. Interacts with the cytoplasmic domain of LNPEP/Otase in SLC2A4/GLUT4-vesicles. Binds to the N-terminus of telomeric TERF1 via the ANK repeats. Found in a complex with POT1; TERF1 and TINF2. Interacts with AXIN1. Interacts with AXIN2. Interacts with BLZF1 and CASC3. Interacts with NUMA1. Post-translationally, phosphorylated on serine residues by MAPK kinases upon insulin stimulation. Phosphorylated during mitosis. In terms of processing, ubiquitinated by RNF146 when auto-poly-ADP-ribosylated, leading to its degradation. ADP-ribosylated (-auto). Poly-ADP-ribosylated protein is recognized by RNF146, followed by ubiquitination.

It is found in the cytoplasm. The protein resides in the golgi apparatus membrane. It localises to the cytoskeleton. Its subcellular location is the microtubule organizing center. The protein localises to the centrosome. It is found in the nucleus. The protein resides in the nuclear pore complex. It localises to the chromosome. Its subcellular location is the telomere. The protein localises to the spindle pole. The enzyme catalyses NAD(+) + (ADP-D-ribosyl)n-acceptor = nicotinamide + (ADP-D-ribosyl)n+1-acceptor + H(+).. The catalysed reaction is L-aspartyl-[protein] + NAD(+) = 4-O-(ADP-D-ribosyl)-L-aspartyl-[protein] + nicotinamide. It carries out the reaction L-glutamyl-[protein] + NAD(+) = 5-O-(ADP-D-ribosyl)-L-glutamyl-[protein] + nicotinamide. In terms of biological role, poly-ADP-ribosyltransferase involved in various processes such as Wnt signaling pathway, telomere length and vesicle trafficking. Acts as an activator of the Wnt signaling pathway by mediating poly-ADP-ribosylation (PARsylation) of AXIN1 and AXIN2, 2 key components of the beta-catenin destruction complex: poly-ADP-ribosylated target proteins are recognized by RNF146, which mediates their ubiquitination and subsequent degradation. Also mediates PARsylation of BLZF1 and CASC3, followed by recruitment of RNF146 and subsequent ubiquitination. Mediates PARsylation of TERF1, thereby contributing to the regulation of telomere length. Involved in centrosome maturation during prometaphase by mediating PARsylation of HEPACAM2/MIKI. May also regulate vesicle trafficking and modulate the subcellular distribution of SLC2A4/GLUT4-vesicles. May be involved in spindle pole assembly through PARsylation of NUMA1. Stimulates 26S proteasome activity. The sequence is that of Poly [ADP-ribose] polymerase tankyrase-1 (Tnks) from Mus musculus (Mouse).